The sequence spans 256 residues: MLRIADKTFESHLFTGTGKFAAPEVMVEAIRASGSQLVTLAMKRVDLRQHNDAILAPLLAAGVSLLPNTSGAKTAEEAVFAARLAREALGTHWLKLEIHPDARWLLPDPIETLKAAELLVCEGFVVLPYCGADPVLCKRLEEAGCAAVMPLGAPIGSNQGLETRAMLEIIIEQATVPVVVDAGIGVPSHAAQALEMGADAVLVNTAIAVADDPVTMARAFRMAVDAGLLARQAGPGARSTQAQATSPLTGFLEALA.

The active-site Schiff-base intermediate with DXP is the Lys-95. Residues Gly-156, 182–183 (AG), and 204–205 (NT) each bind 1-deoxy-D-xylulose 5-phosphate.

This sequence belongs to the ThiG family. As to quaternary structure, homotetramer. Forms heterodimers with either ThiH or ThiS.

The protein localises to the cytoplasm. The enzyme catalyses [ThiS sulfur-carrier protein]-C-terminal-Gly-aminoethanethioate + 2-iminoacetate + 1-deoxy-D-xylulose 5-phosphate = [ThiS sulfur-carrier protein]-C-terminal Gly-Gly + 2-[(2R,5Z)-2-carboxy-4-methylthiazol-5(2H)-ylidene]ethyl phosphate + 2 H2O + H(+). The protein operates within cofactor biosynthesis; thiamine diphosphate biosynthesis. In terms of biological role, catalyzes the rearrangement of 1-deoxy-D-xylulose 5-phosphate (DXP) to produce the thiazole phosphate moiety of thiamine. Sulfur is provided by the thiocarboxylate moiety of the carrier protein ThiS. In vitro, sulfur can be provided by H(2)S. The chain is Thiazole synthase from Klebsiella pneumoniae (strain 342).